Here is a 507-residue protein sequence, read N- to C-terminus: Beta-glucosidase 3 (507 aa).

An N-terminal signal peptide occupies residues 1–23 (MELTLSLLTIFLLFFALSGRCSD). Gln-41 is a binding site for a beta-D-glucoside. N-linked (GlcNAc...) asparagine glycosylation is present at Asn-64. A beta-D-glucoside-binding positions include His-138 and 183 to 184 (NE). The active-site Proton donor is Glu-184. Cys-203 and Cys-210 are oxidised to a cystine. Residues Asn-209 and Asn-214 are each glycosylated (N-linked (GlcNAc...) asparagine). Tyr-326 contributes to the a beta-D-glucoside binding site. Asn-361 is a glycosylation site (N-linked (GlcNAc...) asparagine). An a beta-D-glucoside-binding site is contributed by Glu-394. Catalysis depends on Glu-394, which acts as the Nucleophile. Asn-429 carries an N-linked (GlcNAc...) asparagine glycan. Residues Trp-439 and Phe-455 each coordinate a beta-D-glucoside. N-linked (GlcNAc...) asparagine glycosylation is found at Asn-461, Asn-485, and Asn-500.

Belongs to the glycosyl hydrolase 1 family.

It catalyses the reaction Hydrolysis of terminal, non-reducing beta-D-glucosyl residues with release of beta-D-glucose.. This Arabidopsis thaliana (Mouse-ear cress) protein is Beta-glucosidase 3.